Reading from the N-terminus, the 273-residue chain is Dermonecrotic toxin LarSicTox-alphaIB1aii (273 aa).

H5 is a catalytic residue. E25 and D27 together coordinate Mg(2+). H41 acts as the Nucleophile in catalysis. 2 cysteine pairs are disulfide-bonded: C45/C51 and C47/C190. Mg(2+) is bound at residue D85. The N-linked (GlcNAc...) asparagine glycan is linked to N250.

This sequence belongs to the arthropod phospholipase D family. Class II subfamily. The cofactor is Mg(2+). Expressed by the venom gland.

Its subcellular location is the secreted. It carries out the reaction an N-(acyl)-sphingosylphosphocholine = an N-(acyl)-sphingosyl-1,3-cyclic phosphate + choline. The catalysed reaction is an N-(acyl)-sphingosylphosphoethanolamine = an N-(acyl)-sphingosyl-1,3-cyclic phosphate + ethanolamine. It catalyses the reaction a 1-acyl-sn-glycero-3-phosphocholine = a 1-acyl-sn-glycero-2,3-cyclic phosphate + choline. The enzyme catalyses a 1-acyl-sn-glycero-3-phosphoethanolamine = a 1-acyl-sn-glycero-2,3-cyclic phosphate + ethanolamine. In terms of biological role, dermonecrotic toxins cleave the phosphodiester linkage between the phosphate and headgroup of certain phospholipids (sphingolipid and lysolipid substrates), forming an alcohol (often choline) and a cyclic phosphate. This toxin acts on sphingomyelin (SM). It may also act on ceramide phosphoethanolamine (CPE), lysophosphatidylcholine (LPC) and lysophosphatidylethanolamine (LPE), but not on lysophosphatidylserine (LPS), and lysophosphatidylglycerol (LPG). It acts by transphosphatidylation, releasing exclusively cyclic phosphate products as second products. Induces dermonecrosis, hemolysis, increased vascular permeability, edema, inflammatory response, and platelet aggregation. The polypeptide is Dermonecrotic toxin LarSicTox-alphaIB1aii (Loxosceles arizonica (Arizona brown spider)).